An 86-amino-acid chain; its full sequence is Cell division topological specificity factor (86 aa).

The protein belongs to the MinE family.

Functionally, prevents the cell division inhibition by proteins MinC and MinD at internal division sites while permitting inhibition at polar sites. This ensures cell division at the proper site by restricting the formation of a division septum at the midpoint of the long axis of the cell. This is Cell division topological specificity factor from Rhizobium rhizogenes (strain K84 / ATCC BAA-868) (Agrobacterium radiobacter).